A 352-amino-acid polypeptide reads, in one-letter code: Methylthioribose-1-phosphate isomerase (352 aa).

Substrate contacts are provided by residues 49–51, R93, and Q202; that span reads RGA. D243 acts as the Proton donor in catalysis. Residue 253–254 coordinates substrate; sequence NK.

Belongs to the eIF-2B alpha/beta/delta subunits family. MtnA subfamily.

The enzyme catalyses 5-(methylsulfanyl)-alpha-D-ribose 1-phosphate = 5-(methylsulfanyl)-D-ribulose 1-phosphate. Its pathway is amino-acid biosynthesis; L-methionine biosynthesis via salvage pathway; L-methionine from S-methyl-5-thio-alpha-D-ribose 1-phosphate: step 1/6. In terms of biological role, catalyzes the interconversion of methylthioribose-1-phosphate (MTR-1-P) into methylthioribulose-1-phosphate (MTRu-1-P). The protein is Methylthioribose-1-phosphate isomerase of Magnetococcus marinus (strain ATCC BAA-1437 / JCM 17883 / MC-1).